The sequence spans 48 residues: Ambineela (48 aa).

In terms of assembly, monomer. The blue color is due to an unidentified non-fluorescent cofactor, covalently bound to it.

In terms of biological role, ambineela is a blue protein and has a pI of 8.7. In Acidianus ambivalens (Desulfurolobus ambivalens), this protein is Ambineela.